The following is a 387-amino-acid chain: Testis-expressed protein 9 (387 aa).

Disordered stretches follow at residues 1-25 and 58-133; these read MAGR…LAAG and REQQ…LKYP. 2 stretches are compositionally biased toward polar residues: residues 70–91 and 103–115; these read ALTT…SSEG and KNTG…QNRL. The stretch at 184-347 forms a coiled coil; sequence IGTEAQIRFL…ERQKGELMIG (164 aa).

As to expression, testis-specific.

It is found in the cytoplasm. Its subcellular location is the cytoskeleton. It localises to the microtubule organizing center. The protein localises to the centrosome. The protein resides in the centriolar satellite. In Mus musculus (Mouse), this protein is Testis-expressed protein 9 (Tex9).